Reading from the N-terminus, the 612-residue chain is Chaperone protein DnaK (612 aa).

T174 carries the phosphothreonine; by autocatalysis modification. The disordered stretch occupies residues 578-612 (GAQAGAQGQGAAGGQKQDGNVYDADYKVVDDDKKE). The span at 601 to 612 (ADYKVVDDDKKE) shows a compositional bias: basic and acidic residues.

The protein belongs to the heat shock protein 70 family.

Its function is as follows. Acts as a chaperone. This is Chaperone protein DnaK from Moorella thermoacetica (strain ATCC 39073 / JCM 9320).